Here is a 158-residue protein sequence, read N- to C-terminus: Transcription elongation factor GreA (158 aa).

This sequence belongs to the GreA/GreB family.

In terms of biological role, necessary for efficient RNA polymerase transcription elongation past template-encoded arresting sites. The arresting sites in DNA have the property of trapping a certain fraction of elongating RNA polymerases that pass through, resulting in locked ternary complexes. Cleavage of the nascent transcript by cleavage factors such as GreA or GreB allows the resumption of elongation from the new 3'terminus. GreA releases sequences of 2 to 3 nucleotides. The polypeptide is Transcription elongation factor GreA (Methylobacterium nodulans (strain LMG 21967 / CNCM I-2342 / ORS 2060)).